A 455-amino-acid polypeptide reads, in one-letter code: UDP-glycosyltransferase 75B2 (455 aa).

His-16 (proton acceptor) is an active-site residue. His-16 lines the an anthocyanidin pocket. Positions 337, 352, 355, 357, 360, 376, and 377 each coordinate UDP-alpha-D-glucose.

The protein belongs to the UDP-glycosyltransferase family.

It catalyses the reaction (indol-3-yl)acetate + UDP-alpha-D-glucose = 1-O-(indol-3-ylacetyl)-beta-D-glucose + UDP. The protein operates within plant hormone metabolism; auxin conjugation. Functionally, possesses low catalytic activity in vitro. Also active as glucosyltransferase in vitro on benzoates and benzoate derivatives. This Arabidopsis thaliana (Mouse-ear cress) protein is UDP-glycosyltransferase 75B2 (UGT75B2).